The chain runs to 470 residues: Poly(A) polymerase catalytic subunit (470 aa).

Active-site residues include Asp192 and Asp194.

It belongs to the poxviridae poly(A) polymerase catalytic subunit family. As to quaternary structure, heterodimer of a large (catalytic) subunit and a small (regulatory) subunit.

It catalyses the reaction RNA(n) + ATP = RNA(n)-3'-adenine ribonucleotide + diphosphate. In terms of biological role, polymerase that creates the 3'-poly(A) tail of mRNA's. This is Poly(A) polymerase catalytic subunit (PAPL) from Sus scrofa (Pig).